The sequence spans 537 residues: Glutamyl-tRNA(Gln) amidotransferase subunit B, chloroplastic/mitochondrial (537 aa).

This sequence belongs to the GatB/GatE family. GatB subfamily. In terms of assembly, subunit of the heterotrimeric GatCAB amidotransferase (AdT) complex, composed of A, B and C subunits.

The protein localises to the mitochondrion. Its subcellular location is the plastid. It is found in the chloroplast. The enzyme catalyses L-glutamyl-tRNA(Gln) + L-glutamine + ATP + H2O = L-glutaminyl-tRNA(Gln) + L-glutamate + ADP + phosphate + H(+). Allows the formation of correctly charged Gln-tRNA(Gln) through the transamidation of misacylated Glu-tRNA(Gln) in chloroplasts and mitochondria. The reaction takes place in the presence of glutamine and ATP through an activated gamma-phospho-Glu-tRNA(Gln). The chain is Glutamyl-tRNA(Gln) amidotransferase subunit B, chloroplastic/mitochondrial from Ostreococcus tauri.